Reading from the N-terminus, the 274-residue chain is Dermonecrotic toxin SdSicTox-betaIIB1ai (274 aa).

Residue His5 is part of the active site. Positions 25 and 27 each coordinate Mg(2+). Residue His41 is the Nucleophile of the active site. 2 disulfide bridges follow: Cys45–Cys51 and Cys47–Cys190. Asp85 is a binding site for Mg(2+).

It belongs to the arthropod phospholipase D family. Class II subfamily. Requires Mg(2+) as cofactor. Expressed by the venom gland.

It localises to the secreted. The enzyme catalyses an N-(acyl)-sphingosylphosphocholine = an N-(acyl)-sphingosyl-1,3-cyclic phosphate + choline. The catalysed reaction is an N-(acyl)-sphingosylphosphoethanolamine = an N-(acyl)-sphingosyl-1,3-cyclic phosphate + ethanolamine. It carries out the reaction a 1-acyl-sn-glycero-3-phosphocholine = a 1-acyl-sn-glycero-2,3-cyclic phosphate + choline. It catalyses the reaction a 1-acyl-sn-glycero-3-phosphoethanolamine = a 1-acyl-sn-glycero-2,3-cyclic phosphate + ethanolamine. Functionally, dermonecrotic toxins cleave the phosphodiester linkage between the phosphate and headgroup of certain phospholipids (sphingolipid and lysolipid substrates), forming an alcohol (often choline) and a cyclic phosphate. This toxin acts on sphingomyelin (SM). It may also act on ceramide phosphoethanolamine (CPE), lysophosphatidylcholine (LPC) and lysophosphatidylethanolamine (LPE), but not on lysophosphatidylserine (LPS), and lysophosphatidylglycerol (LPG). It acts by transphosphatidylation, releasing exclusively cyclic phosphate products as second products. Induces dermonecrosis, hemolysis, increased vascular permeability, edema, inflammatory response, and platelet aggregation. This Sicarius cf. damarensis (strain GJB-2008) (Six-eyed sand spider) protein is Dermonecrotic toxin SdSicTox-betaIIB1ai.